Reading from the N-terminus, the 514-residue chain is Putative ribose/galactose/methyl galactoside import ATP-binding protein 3 (514 aa).

ABC transporter domains follow at residues 21–256 and 267–512; these read LRLD…VGRT and VPTD…SGRS. ATP is bound at residue 53-60; sequence GENGAGKS.

This sequence belongs to the ABC transporter superfamily. Carbohydrate importer 2 (CUT2) (TC 3.A.1.2) family.

It is found in the cell inner membrane. The enzyme catalyses D-ribose(out) + ATP + H2O = D-ribose(in) + ADP + phosphate + H(+). It catalyses the reaction D-galactose(out) + ATP + H2O = D-galactose(in) + ADP + phosphate + H(+). Functionally, part of an ABC transporter complex involved in carbohydrate import. Could be involved in ribose, galactose and/or methyl galactoside import. Responsible for energy coupling to the transport system. The sequence is that of Putative ribose/galactose/methyl galactoside import ATP-binding protein 3 from Burkholderia cenocepacia (strain HI2424).